The following is a 426-amino-acid chain: Putative acid phosphatase 1 (426 aa).

The signal sequence occupies residues 1 to 18 (MRVLFYVFPFVIFALSQA). Topologically, residues 19 to 388 (QLISVHVIFR…HNWTMTTVSW (370 aa)) are extracellular. His-29 serves as the catalytic Nucleophile. 2 N-linked (GlcNAc...) asparagine glycosylation sites follow: Asn-37 and Asn-145. A disulfide bridge connects residues Cys-133 and Cys-369. Asp-276 acts as the Proton donor in catalysis. Asn-380 is a glycosylation site (N-linked (GlcNAc...) asparagine). A helical transmembrane segment spans residues 389–409 (ILIGISAFLLIILIIMSYLAV). Over 410–426 (RYKNRSVVTIKKVCLEN) the chain is Cytoplasmic.

The protein belongs to the histidine acid phosphatase family.

The protein resides in the membrane. It carries out the reaction a phosphate monoester + H2O = an alcohol + phosphate. The sequence is that of Putative acid phosphatase 1 from Caenorhabditis briggsae.